Here is a 528-residue protein sequence, read N- to C-terminus: DEAD-box ATP-dependent RNA helicase CshA (528 aa).

The short motif at 2–30 is the Q motif element; sequence TTFRELGLSDSLLQSVESMGFEEATPIQA. The Helicase ATP-binding domain occupies 33 to 203; that stretch reads IPHALQGKDI…ERFMTEPQHI (171 aa). Residue 46–53 participates in ATP binding; that stretch reads AQTGTGKT. The DEAD box motif lies at 151-154; that stretch reads DEAD. Residues 214–374 enclose the Helicase C-terminal domain; the sequence is NIQQFYLEVQ…RMDAPTLDEA (161 aa). A disordered region spans residues 428–528; sequence TTPIALTSEP…RKHHSRKPQA (101 aa). The segment covering 458–506 has biased composition (basic and acidic residues); that stretch reads DGNRNRSRDGRGGDGRNRDRNRDGRNRDGNRDRNREGSRDGNRGRRGEG. Over residues 518 to 528 the composition is skewed to basic residues; that stretch reads ERKHHSRKPQA.

This sequence belongs to the DEAD box helicase family. CshA subfamily. Oligomerizes, may be a member of the RNA degradosome.

It localises to the cytoplasm. The enzyme catalyses ATP + H2O = ADP + phosphate + H(+). Functionally, DEAD-box RNA helicase possibly involved in RNA degradation. Unwinds dsRNA in both 5'- and 3'-directions, has RNA-dependent ATPase activity. This Bacillus thuringiensis (strain Al Hakam) protein is DEAD-box ATP-dependent RNA helicase CshA.